The chain runs to 348 residues: Ileal sodium/bile acid cotransporter (348 aa).

Residues 1–28 lie on the Extracellular side of the membrane; the sequence is MNDPNSCVDNATVCSGASCVVPESNFNN. N-linked (GlcNAc...) asparagine glycosylation occurs at Asn-10. A helical transmembrane segment spans residues 29-49; it reads ILSVVLSTVLTILLALVMFSM. At 50–82 the chain is on the cytoplasmic side; the sequence is GCNVEIKKFLGHIKRPWGICVGFLCQFGIMPLT. A helical membrane pass occupies residues 83-103; the sequence is GFILSVAFDILPLQAVVVLII. The Extracellular segment spans residues 104 to 126; the sequence is GCCPGGTASNILAYWVDGDMDLS. Residues 127–147 traverse the membrane as a helical segment; sequence VSMTTCSTLLALGMMPLCLLI. The Cytoplasmic portion of the chain corresponds to 148–157; the sequence is YTKMWVDSGS. Residues 158-178 traverse the membrane as a helical segment; the sequence is IVIPYDNIGTSLVSLVVPVSI. Topologically, residues 179–195 are extracellular; the sequence is GMFVNHKWPQKAKIILK. Residues 196 to 216 traverse the membrane as a helical segment; sequence IGSIAGAILIVLIAVVGGILY. Residues 217–224 are Cytoplasmic-facing; the sequence is QSAWIIAP. The helical transmembrane segment at 225 to 245 threads the bilayer; it reads KLWIIGTIFPVAGYSLGFLLA. Residues 246-284 lie on the Extracellular side of the membrane; sequence RIAGLPWYRCRTVAFETGMQNTQLCSTIVQLSFTPEELN. The chain crosses the membrane as a helical span at residues 285–305; that stretch reads VVFTFPLIYSIFQLAFAAIFL. Over 306 to 348 the chain is Cytoplasmic; the sequence is GFYVAYKKCHGKNKAEIPESKENGTEPESSFYKANGGFQPDEK. A compositionally biased stretch (basic and acidic residues) spans 320–329; that stretch reads AEIPESKENG. A disordered region spans residues 320–348; sequence AEIPESKENGTEPESSFYKANGGFQPDEK. Phosphoserine is present on Ser-335.

The protein belongs to the bile acid:sodium symporter (BASS) (TC 2.A.28) family. In terms of assembly, monomer and homodimer. As to expression, mainly expressed in ileum and kidney, lower expression in cecum.

The protein localises to the membrane. The enzyme catalyses taurocholate(out) + 2 Na(+)(out) = taurocholate(in) + 2 Na(+)(in). It catalyses the reaction cholate(out) + 2 Na(+)(out) = cholate(in) + 2 Na(+)(in). The catalysed reaction is taurochenodeoxycholate(out) + 2 Na(+)(out) = taurochenodeoxycholate(in) + 2 Na(+)(in). It carries out the reaction tauroursodeoxycholate(out) + 2 Na(+)(out) = tauroursodeoxycholate(in) + 2 Na(+)(in). The enzyme catalyses glycocholate(out) + 2 Na(+)(out) = glycocholate(in) + 2 Na(+)(in). It catalyses the reaction tauronorcholate(out) + 2 Na(+)(out) = tauronorcholate(in) + 2 Na(+)(in). The catalysed reaction is tauroallocholate(out) + 2 Na(+)(out) = tauroallocholate(in) + 2 Na(+)(in). It carries out the reaction taurodeoxycholate(out) + 2 Na(+)(out) = taurodeoxycholate(in) + 2 Na(+)(in). The enzyme catalyses tauro-beta-muricholate(out) + 2 Na(+)(out) = tauro-beta-muricholate(in) + 2 Na(+)(in). Its function is as follows. Plays a critical role in the sodium-dependent reabsorption of bile acids from the lumen of the small intestine. Transports various bile acids, unconjugated or conjugated, such as cholate and taurocholate. Also responsible for bile acid transport in the renal proximal tubules, a salvage mechanism that helps conserve bile acids. Works collaboratively with the Na(+)-taurocholate cotransporting polypeptide (NTCP), the organic solute transporter (OST), and the bile salt export pump (BSEP), to ensure efficacious biological recycling of bile acids during enterohepatic circulation. The protein is Ileal sodium/bile acid cotransporter (SLC10A2) of Homo sapiens (Human).